The sequence spans 105 residues: Large ribosomal subunit protein eL30 (105 aa).

Belongs to the eukaryotic ribosomal protein eL30 family.

This Eremothecium gossypii (strain ATCC 10895 / CBS 109.51 / FGSC 9923 / NRRL Y-1056) (Yeast) protein is Large ribosomal subunit protein eL30 (RPL30).